The sequence spans 154 residues: Ribonuclease H (154 aa).

The 142-residue stretch at 1–142 (MKQVDIFTDG…CDTIARGHAS (142 aa)) folds into the RNase H type-1 domain. Mg(2+) contacts are provided by Asp-9, Glu-47, Asp-69, and Asp-134.

Belongs to the RNase H family. Monomer. It depends on Mg(2+) as a cofactor.

The protein localises to the cytoplasm. The catalysed reaction is Endonucleolytic cleavage to 5'-phosphomonoester.. In terms of biological role, endonuclease that specifically degrades the RNA of RNA-DNA hybrids. The sequence is that of Ribonuclease H from Oleidesulfovibrio alaskensis (strain ATCC BAA-1058 / DSM 17464 / G20) (Desulfovibrio alaskensis).